Here is a 379-residue protein sequence, read N- to C-terminus: MKILRKNHPLLKIVNHSFIDLPTPSNISSWWNFGSLLGMCLVIQILTGLFLAMHYTSDTATAFSSVAHICRDVNYGWLIRYLHANGASMFFICLFIHVGRGIYYGSYVLSETWNIGIILLLTTMATAFVGYVLPWGQMSFWGATVITNLLSAIPYIGSTLVEWIWGGFSVDKATLTRFFAFHFILPFIIAAFALVHLLFLHETGSNNPSGLNSDSDKIPFHPYYTIKDLLGIFLLLLVLMTLALFFPDVLGDPDNFTPANPLNTPAHIKPEWYFLFAYAILRSIPNKLGGVLALVLSILILAAFPLLNTSKQHGLIFRPVTQTIYWIFIANLLVLTWIGGQPVEYPFTTIGQIASITYFTIIIILIPVSNTIENNIIKL.

Helical transmembrane passes span 33–53, 77–98, 113–133, and 178–198; these read FGSL…FLAM, WLIR…FIHV, WNIG…GYVL, and FFAF…VHLL. Residues His83 and His97 each contribute to the heme b site. Positions 182 and 196 each coordinate heme b. Residue His201 participates in a ubiquinone binding. The next 4 membrane-spanning stretches (helical) occupy residues 226-246, 288-308, 320-340, and 347-367; these read IKDL…ALFF, LGGV…PLLN, VTQT…WIGG, and FTTI…ILIP.

Belongs to the cytochrome b family. In terms of assembly, the cytochrome bc1 complex contains 11 subunits: 3 respiratory subunits (MT-CYB, CYC1 and UQCRFS1), 2 core proteins (UQCRC1 and UQCRC2) and 6 low-molecular weight proteins (UQCRH/QCR6, UQCRB/QCR7, UQCRQ/QCR8, UQCR10/QCR9, UQCR11/QCR10 and a cleavage product of UQCRFS1). This cytochrome bc1 complex then forms a dimer. It depends on heme b as a cofactor.

The protein resides in the mitochondrion inner membrane. Functionally, component of the ubiquinol-cytochrome c reductase complex (complex III or cytochrome b-c1 complex) that is part of the mitochondrial respiratory chain. The b-c1 complex mediates electron transfer from ubiquinol to cytochrome c. Contributes to the generation of a proton gradient across the mitochondrial membrane that is then used for ATP synthesis. The polypeptide is Cytochrome b (MT-CYB) (Akodon lindberghi (Lindbergh's grass mouse)).